The chain runs to 202 residues: Holliday junction branch migration complex subunit RuvA (202 aa).

The interval 1-64 (MISRLRGTVL…EDAFDLFGFL (64 aa)) is domain I. The segment at 65–143 (TKGEEEVFLL…TIHLEAVSRG (79 aa)) is domain II. Residues 143 to 147 (GTAPA) form a flexible linker region. The domain III stretch occupies residues 148–202 (AVSGAHADLVSALLNLGYKQPQAEKAADLASERLGAEATFQALFREALKALRSGG).

The protein belongs to the RuvA family. As to quaternary structure, homotetramer. Forms an RuvA(8)-RuvB(12)-Holliday junction (HJ) complex. HJ DNA is sandwiched between 2 RuvA tetramers; dsDNA enters through RuvA and exits via RuvB. An RuvB hexamer assembles on each DNA strand where it exits the tetramer. Each RuvB hexamer is contacted by two RuvA subunits (via domain III) on 2 adjacent RuvB subunits; this complex drives branch migration. In the full resolvosome a probable DNA-RuvA(4)-RuvB(12)-RuvC(2) complex forms which resolves the HJ.

It localises to the cytoplasm. The RuvA-RuvB-RuvC complex processes Holliday junction (HJ) DNA during genetic recombination and DNA repair, while the RuvA-RuvB complex plays an important role in the rescue of blocked DNA replication forks via replication fork reversal (RFR). RuvA specifically binds to HJ cruciform DNA, conferring on it an open structure. The RuvB hexamer acts as an ATP-dependent pump, pulling dsDNA into and through the RuvAB complex. HJ branch migration allows RuvC to scan DNA until it finds its consensus sequence, where it cleaves and resolves the cruciform DNA. This chain is Holliday junction branch migration complex subunit RuvA, found in Myxococcus xanthus (strain DK1622).